Reading from the N-terminus, the 473-residue chain is Bestrophin-4 (473 aa).

Over Met1 to Leu31 the chain is Cytoplasmic. Residue Ala10 coordinates Ca(2+). The chain crosses the membrane as a helical span at residues Leu32 to Arg51. Residues Leu52 to Tyr60 lie on the Extracellular side of the membrane. The helical transmembrane segment at Val61–Leu82 threads the bilayer. The Cytoplasmic portion of the chain corresponds to Gly83–Thr237. The helical transmembrane segment at Gln238–Arg255 threads the bilayer. The Extracellular portion of the chain corresponds to Gln256 to Pro289. A helical transmembrane segment spans residues Leu290–Leu303. Residues Lys304–Pro473 are Cytoplasmic-facing. 4 residues coordinate Ca(2+): Gln308, Asn311, Asp316, and Asp319. 2 disordered regions span residues Thr379–Gln408 and Arg428–Pro473. Positions Ala396 to Ala407 are enriched in low complexity. Residues Phe445 to Glu461 show a composition bias toward basic and acidic residues. The span at Glu462–Pro473 shows a compositional bias: acidic residues.

Belongs to the anion channel-forming bestrophin (TC 1.A.46) family. Calcium-sensitive chloride channel subfamily. As to expression, predominantly found in colon and the weakly in fetal brain, spinal cord, retina, lung, trachea, testis and placenta.

The protein resides in the cell membrane. The catalysed reaction is chloride(in) = chloride(out). It carries out the reaction hydrogencarbonate(in) = hydrogencarbonate(out). Ligand-gated anion channel that allows the movement of anions across cell membranes when activated by Calcium (Ca2+). Mediates the movement of hydrogencarbonate and chloride. The polypeptide is Bestrophin-4 (Homo sapiens (Human)).